Consider the following 888-residue polypeptide: Alanine--tRNA ligase (888 aa).

Zn(2+) is bound by residues His571, His575, Cys674, and His678.

The protein belongs to the class-II aminoacyl-tRNA synthetase family. It depends on Zn(2+) as a cofactor.

Its subcellular location is the cytoplasm. It carries out the reaction tRNA(Ala) + L-alanine + ATP = L-alanyl-tRNA(Ala) + AMP + diphosphate. Catalyzes the attachment of alanine to tRNA(Ala) in a two-step reaction: alanine is first activated by ATP to form Ala-AMP and then transferred to the acceptor end of tRNA(Ala). Also edits incorrectly charged Ser-tRNA(Ala) and Gly-tRNA(Ala) via its editing domain. The polypeptide is Alanine--tRNA ligase (Nocardia farcinica (strain IFM 10152)).